Consider the following 194-residue polypeptide: uncharacterized protein (194 aa).

The protein to A.rhizogenes plasmid pRia4B ORF-3 in virA region.

This is an uncharacterized protein from Sinorhizobium fredii (strain NBRC 101917 / NGR234).